We begin with the raw amino-acid sequence, 461 residues long: Spermidine/putrescine import ATP-binding protein PotA (461 aa).

Residues 10–240 form the ABC transporter domain; the sequence is IEVNGVSKFF…PINSFVADFI (231 aa). An ATP-binding site is contributed by 42 to 49; sequence GPSGCGKT.

This sequence belongs to the ABC transporter superfamily. Spermidine/putrescine importer (TC 3.A.1.11.1) family. As to quaternary structure, the complex is composed of two ATP-binding proteins (PotA), two transmembrane proteins (PotB and PotC) and a solute-binding protein (PotD).

The protein localises to the cell inner membrane. The catalysed reaction is ATP + H2O + polyamine-[polyamine-binding protein]Side 1 = ADP + phosphate + polyamineSide 2 + [polyamine-binding protein]Side 1.. Part of the ABC transporter complex PotABCD involved in spermidine/putrescine import. Responsible for energy coupling to the transport system. In Bacteroides fragilis (strain YCH46), this protein is Spermidine/putrescine import ATP-binding protein PotA.